The sequence spans 1703 residues: Protein TIC 214 (1703 aa).

A run of 6 helical transmembrane segments spans residues 39 to 61, 67 to 87, 90 to 110, 138 to 158, 174 to 194, and 220 to 240; these read YYGF…TFFL, GIIC…SIYC, LYVM…YMFY, LLLD…NPVL, FFLT…INSI, and FSIL…VPLI. Disordered regions lie at residues 615–643 and 1431–1494; these read GPRK…KERE and TKEP…WKSK. The stretch at 618–660 forms a coiled coil; the sequence is KGKLEDKEKEKEKAAQTQTEVKKEREKEKEERVIKRFQNQSDF. Over residues 619–643 the composition is skewed to basic and acidic residues; that stretch reads GKLEDKEKEKEKAAQTQTEVKKERE.

Belongs to the TIC214 family. Part of the Tic complex.

The protein resides in the plastid. Its subcellular location is the chloroplast inner membrane. Functionally, involved in protein precursor import into chloroplasts. May be part of an intermediate translocation complex acting as a protein-conducting channel at the inner envelope. This Psilotum nudum (Whisk fern) protein is Protein TIC 214.